Here is a 217-residue protein sequence, read N- to C-terminus: uncharacterized protein (217 aa).

This is an uncharacterized protein from Escherichia coli.